We begin with the raw amino-acid sequence, 412 residues long: MMSLSHASVPHTNPTAPHTLAALLAAGGLAGKRVFIRADLNVPQDAAGDITDDTRIRASVPAIAACLQAGAAVMVTSHLGRPQEGAPDPRHSLAPVGRRLSELLGRQVPLLSGWTEGGFQVPPGQVVLLENCRMNTGEKKNSDELAQKMAALCDVYVNDAFGTAHRAEATTHGIARYAPVACAGPLLAAEIDALGKALGQPARPLVAIVAGSKVSTKLTILKSLADKVDNLVVGGGIANTFMLAAGLKIGKSLAEPDLLADARAIIDIMAARGASVPIPVDVVCAKEFSATAAAAVKDVRDVADDDMILDIGPKTAAMLADQLKAAGTIVWNGPVGVFEFDQFGNGTRVLAQAIAESKAFSIAGGGDTLAAIAKYGIADRVGYISTGGGAFLEFLEGKKLPALDVLEQRAAS.

Substrate is bound by residues 39–41, R55, 78–81, R133, and R166; these read DLN and HLGR. Residues K217, E339, and 365–368 contribute to the ATP site; that span reads GGDT.

The protein belongs to the phosphoglycerate kinase family. Monomer.

It is found in the cytoplasm. It carries out the reaction (2R)-3-phosphoglycerate + ATP = (2R)-3-phospho-glyceroyl phosphate + ADP. It participates in carbohydrate biosynthesis; Calvin cycle. In Cupriavidus necator (strain ATCC 17699 / DSM 428 / KCTC 22496 / NCIMB 10442 / H16 / Stanier 337) (Ralstonia eutropha), this protein is Phosphoglycerate kinase, plasmid (cbbKP).